Reading from the N-terminus, the 163-residue chain is Protein MATERNALLY EXPRESSED GENE 5 (163 aa).

The region spanning 38–117 is the RRM domain; sequence STLYIEGLPA…DDVNVSAPAE (80 aa). 2 disulfides stabilise this stretch: Cys140–Cys162 and Cys143–Cys151.

The protein belongs to the MEG family. In terms of tissue distribution, ubiquitous.

This chain is Protein MATERNALLY EXPRESSED GENE 5 (MEG5), found in Zea mays (Maize).